Here is a 216-residue protein sequence, read N- to C-terminus: Protein fmp32, mitochondrial (216 aa).

A coiled-coil region spans residues 111–133 (RQEMVALHSQVEQLFSDVERLKT). A helical membrane pass occupies residues 193 to 215 (TLQWVFGIVTGSGALLLAYVRLI).

The protein belongs to the CCDC90 family.

It is found in the mitochondrion. The protein resides in the membrane. This chain is Protein fmp32, mitochondrial (fmp32), found in Schizosaccharomyces pombe (strain 972 / ATCC 24843) (Fission yeast).